Reading from the N-terminus, the 391-residue chain is Coiled-coil domain-containing protein 85C-A (391 aa).

2 coiled-coil regions span residues 23–87 (KCSK…ELCC) and 121–146 (FQQK…KEII). The interval 154 to 212 (NGAGSRSSIDSQSSLSNLNGGSATVRDVGDGSSTSSTGSAGSPDHHHSHIHKPTEGKIT) is disordered. Low complexity-rich tracts occupy residues 158–175 (SRSS…NGGS) and 183–195 (DGSS…SAGS).

The protein belongs to the CCDC85 family.

The protein resides in the cell junction. It localises to the tight junction. The protein localises to the adherens junction. In terms of biological role, may play a role in cell-cell adhesion and epithelium development through its interaction with proteins of the beta-catenin family. May play an important role in cortical development, especially in the maintenance of radial glia. The polypeptide is Coiled-coil domain-containing protein 85C-A (ccdc85ca) (Danio rerio (Zebrafish)).